The following is a 117-amino-acid chain: Large ribosomal subunit protein uL18 (117 aa).

It belongs to the universal ribosomal protein uL18 family. As to quaternary structure, part of the 50S ribosomal subunit; part of the 5S rRNA/L5/L18/L25 subcomplex. Contacts the 5S and 23S rRNAs.

Functionally, this is one of the proteins that bind and probably mediate the attachment of the 5S RNA into the large ribosomal subunit, where it forms part of the central protuberance. The sequence is that of Large ribosomal subunit protein uL18 from Enterobacter sp. (strain 638).